We begin with the raw amino-acid sequence, 137 residues long: Small ribosomal subunit protein uS8 (137 aa).

Belongs to the universal ribosomal protein uS8 family. In terms of assembly, part of the 30S ribosomal subunit. Contacts proteins S5 and S12.

Its function is as follows. One of the primary rRNA binding proteins, it binds directly to 16S rRNA central domain where it helps coordinate assembly of the platform of the 30S subunit. This chain is Small ribosomal subunit protein uS8, found in Metamycoplasma arthritidis (strain 158L3-1) (Mycoplasma arthritidis).